The chain runs to 182 residues: MSDKTVKSTNLMAFIATKMLERQEDLDTCTEMQVEKMKTSTKARLRTESSFAPRTWEDAIKDEILRRSVDTSSLDKWPELKQELENVSDALKADSLWLPMKSLSLYSKVSNQEPNSIPIGEMKHQILTRLKLICSRLEKLDLNLSKAVLGIQNSEDLILIIYNRDICKTTILMIKSLCNSLI.

2 consecutive short sequence motifs (nuclear export signal) follow at residues 96–105 (LWLPMKSLSL) and 122–132 (MKHQILTRLKL).

The protein belongs to the influenza viruses NEP family. Interacts with protein M1. May interact with host nucleoporin RAB/HRB and exportin XPO1/CRM1.

It is found in the virion. The protein localises to the host nucleus. In terms of biological role, mediates the nuclear export of encapsidated genomic RNAs (ribonucleoproteins, RNPs). Acts as an adapter between viral RNPs complexes and the nuclear export machinery of the cell. Possesses no intrinsic RNA-binding activity, but includes a C-terminal M1-binding domain. This domain is believed to allow recognition of RNPs bound to the protein M1. Since protein M1 is not available in large quantities before late stages of infection, such an indirect recognition mechanism probably ensures that genomic RNPs are not exported from the host nucleus until sufficient quantities of viral mRNA and progeny genomic RNA have been synthesized. Furthermore, the RNPs enter the host cytoplasm only when associated with the M1 protein that is necessary to guide them to the plasma membrane. May down-regulate viral RNA synthesis when overproduced. This chain is Nuclear export protein, found in Homo sapiens (Human).